We begin with the raw amino-acid sequence, 205 residues long: Small ribosomal subunit protein uS4 (205 aa).

Residues Pro-26–Asp-47 are disordered. An S4 RNA-binding domain is found at Arg-94 to Leu-154.

This sequence belongs to the universal ribosomal protein uS4 family. Part of the 30S ribosomal subunit. Contacts protein S5. The interaction surface between S4 and S5 is involved in control of translational fidelity.

One of the primary rRNA binding proteins, it binds directly to 16S rRNA where it nucleates assembly of the body of the 30S subunit. Its function is as follows. With S5 and S12 plays an important role in translational accuracy. The chain is Small ribosomal subunit protein uS4 from Gluconacetobacter diazotrophicus (strain ATCC 49037 / DSM 5601 / CCUG 37298 / CIP 103539 / LMG 7603 / PAl5).